Consider the following 231-residue polypeptide: Ribose-5-phosphate isomerase A (231 aa).

Residues 32 to 35 (TGST), 85 to 88 (DGAD), and 98 to 101 (KGGG) each bind substrate. The active-site Proton acceptor is Glu107. Lys125 is a binding site for substrate.

Belongs to the ribose 5-phosphate isomerase family. In terms of assembly, homodimer.

It carries out the reaction aldehydo-D-ribose 5-phosphate = D-ribulose 5-phosphate. The protein operates within carbohydrate degradation; pentose phosphate pathway; D-ribose 5-phosphate from D-ribulose 5-phosphate (non-oxidative stage): step 1/1. Catalyzes the reversible conversion of ribose-5-phosphate to ribulose 5-phosphate. In Paraburkholderia phymatum (strain DSM 17167 / CIP 108236 / LMG 21445 / STM815) (Burkholderia phymatum), this protein is Ribose-5-phosphate isomerase A.